We begin with the raw amino-acid sequence, 274 residues long: HMP-PP phosphatase (274 aa).

Catalysis depends on Asp8, which acts as the Nucleophile. The Mg(2+) site is built by Asp8, Asp10, and Asp213.

The protein belongs to the HAD-like hydrolase superfamily. Cof family. Requires Mg(2+) as cofactor.

It carries out the reaction 4-amino-2-methyl-5-(diphosphooxymethyl)pyrimidine + H2O = 4-amino-2-methyl-5-(phosphooxymethyl)pyrimidine + phosphate + H(+). Functionally, catalyzes the hydrolysis of 4-amino-2-methyl-5-hydroxymethylpyrimidine pyrophosphate (HMP-PP) to 4-amino-2-methyl-5-hydroxymethylpyrimidine phosphate (HMP-P). The chain is HMP-PP phosphatase from Serratia proteamaculans (strain 568).